We begin with the raw amino-acid sequence, 942 residues long: Lambda-carrageenase (942 aa).

Positions 1-25 are cleaved as a signal peptide; sequence MKIKILSAMVASSLLIGCVIPTVKA.

Monomer.

It localises to the secreted. The enzyme catalyses Endohydrolysis of (1-&gt;4)-beta-linkages in the backbone of lambda-carrageenan, resulting in the tetrasaccharide alpha-D-Galp2,6S2-(1-&gt;3)-beta-D-Galp2S-(1-&gt;4)-alpha-D-Galp2,6S2-(1-&gt;3)-D-Galp2S.. Hydrolyzes lambda-carrageenan with inversion of anomeric configuration. Does not hydrolyze iota- and kappa-carrageenans, agarose or porphyran. In Pseudoalteromonas carrageenovora (Alteromonas carrageenovora), this protein is Lambda-carrageenase.